A 418-amino-acid polypeptide reads, in one-letter code: Deubiquitinase and deneddylase Dub1 (418 aa).

Residues 1 to 11 are compositionally biased toward polar residues; that stretch reads MLSPTNSTSKT. Positions 1-23 are disordered; sequence MLSPTNSTSKTAPVPPQDSSKPV. Residues 40-60 form a helical membrane-spanning segment; the sequence is TALVVLLVVVTLGLILLFYSF. The disordered stretch occupies residues 72–145; the sequence is TRPSTKEQPT…LPPKAPKPVK (74 aa). Residues 86-141 show a composition bias toward pro residues; sequence VPLPSPPLAVPRPSTPPPPVISRPSMPPAPTPAISPPSTPSAPKPSTPPPLPPKAP. Active-site residues include His-288, Asp-305, and Cys-358.

It belongs to the peptidase C48 family.

It localises to the secreted. The protein localises to the host cell. It is found in the membrane. Effector proteins function to alter host cell physiology and promote bacterial survival in host tissues. This protease possesses deubiquitinating and deneddylating activities. The sequence is that of Deubiquitinase and deneddylase Dub1 (cdu1) from Chlamydia trachomatis serovar E (strain Sweden2).